Consider the following 480-residue polypeptide: Protein nucleotidyltransferase YdiU (480 aa).

ATP contacts are provided by G86, G88, R89, K109, D121, G122, R172, and R179. D248 acts as the Proton acceptor in catalysis. Mg(2+) is bound by residues N249 and D258. Residue D258 participates in ATP binding.

It belongs to the SELO family. Requires Mg(2+) as cofactor. Mn(2+) serves as cofactor.

It carries out the reaction L-seryl-[protein] + ATP = 3-O-(5'-adenylyl)-L-seryl-[protein] + diphosphate. It catalyses the reaction L-threonyl-[protein] + ATP = 3-O-(5'-adenylyl)-L-threonyl-[protein] + diphosphate. The enzyme catalyses L-tyrosyl-[protein] + ATP = O-(5'-adenylyl)-L-tyrosyl-[protein] + diphosphate. The catalysed reaction is L-histidyl-[protein] + UTP = N(tele)-(5'-uridylyl)-L-histidyl-[protein] + diphosphate. It carries out the reaction L-seryl-[protein] + UTP = O-(5'-uridylyl)-L-seryl-[protein] + diphosphate. It catalyses the reaction L-tyrosyl-[protein] + UTP = O-(5'-uridylyl)-L-tyrosyl-[protein] + diphosphate. Its function is as follows. Nucleotidyltransferase involved in the post-translational modification of proteins. It can catalyze the addition of adenosine monophosphate (AMP) or uridine monophosphate (UMP) to a protein, resulting in modifications known as AMPylation and UMPylation. The sequence is that of Protein nucleotidyltransferase YdiU from Klebsiella pneumoniae subsp. pneumoniae (strain ATCC 700721 / MGH 78578).